The primary structure comprises 111 residues: Cell division protein FtsB (111 aa).

The Cytoplasmic segment spans residues 1–3 (MRL). The chain crosses the membrane as a helical span at residues 4–21 (LFLVLLVLLGLIQYPLWL). At 22-111 (GKGGWFKVWD…PGQTASAPRR (90 aa)) the chain is on the periplasmic side. A coiled-coil region spans residues 31 to 62 (DLQRQVAAQHETNDGLRARNAALEAEVRDLAT). The tract at residues 88–111 (VPPGTPVPQPAPGAPGQTASAPRR) is disordered. The span at 90 to 100 (PGTPVPQPAPG) shows a compositional bias: pro residues. A compositionally biased stretch (low complexity) spans 101–111 (APGQTASAPRR).

Belongs to the FtsB family. As to quaternary structure, part of a complex composed of FtsB, FtsL and FtsQ.

The protein resides in the cell inner membrane. Its function is as follows. Essential cell division protein. May link together the upstream cell division proteins, which are predominantly cytoplasmic, with the downstream cell division proteins, which are predominantly periplasmic. This Bordetella petrii (strain ATCC BAA-461 / DSM 12804 / CCUG 43448) protein is Cell division protein FtsB.